We begin with the raw amino-acid sequence, 81 residues long: Small cysteine-rich protein 6 (81 aa).

A signal peptide spans 1-23 (MDTKVACLLLIILGALTVQGAVS). Residues 24-25 (GN) constitute a propeptide that is removed on maturation.

This sequence belongs to the Cnidaria small cysteine-rich protein (SCRiP) family. beta subfamily. Contains 4 disulfide bonds.

The protein resides in the secreted. It is found in the nematocyst. Functionally, induces neurotoxic symptoms on zebrafish. Has also been claimed to be implied in calcification, but tests on homolog proteins suggest that proteins of this family have a neurotoxic function and not a calcification function. This chain is Small cysteine-rich protein 6, found in Orbicella faveolata (Mountainous star coral).